Reading from the N-terminus, the 249-residue chain is 2,3-bisphosphoglycerate-dependent phosphoglycerate mutase (249 aa).

Residues 8–15, 21–22, R60, 87–90, K98, 114–115, and 183–184 each bind substrate; these read RHGESTWN, TG, ERHY, RR, and GN. H9 serves as the catalytic Tele-phosphohistidine intermediate. E87 (proton donor/acceptor) is an active-site residue.

Belongs to the phosphoglycerate mutase family. BPG-dependent PGAM subfamily. Homodimer.

It carries out the reaction (2R)-2-phosphoglycerate = (2R)-3-phosphoglycerate. It functions in the pathway carbohydrate degradation; glycolysis; pyruvate from D-glyceraldehyde 3-phosphate: step 3/5. In terms of biological role, catalyzes the interconversion of 2-phosphoglycerate and 3-phosphoglycerate. This chain is 2,3-bisphosphoglycerate-dependent phosphoglycerate mutase, found in Azoarcus sp. (strain BH72).